Reading from the N-terminus, the 427-residue chain is Endothelin-1 receptor (427 aa).

An N-terminal signal peptide occupies residues 1 to 20 (MSIFCLAAYFWLTMVGGVMA). At 21 to 80 (DNPERYSANLSSHMEDFTPFPGTEINFLGTTHRPPNLALPSNGSMHGYCPQQTKITTAFK) the chain is on the extracellular side. N-linked (GlcNAc...) asparagine glycosylation is found at Asn29 and Asn62. A helical transmembrane segment spans residues 81 to 102 (YINTVISCTIFIVGMVGNATLL). Topologically, residues 103–112 (RIIYQNKCMR) are cytoplasmic. A helical membrane pass occupies residues 113-132 (NGPNALIASLALGDLIYVVI). The Extracellular portion of the chain corresponds to 133-159 (DLPINVFKLLAGRWPFDHNDFGVFLCK). The cysteines at positions 158 and 239 are disulfide-linked. A helical transmembrane segment spans residues 160–181 (LFPFLQKSSVGITVLNLCALSV). At 182–205 (DRYRAVASWSRVQGIGIPLITAIE) the chain is on the cytoplasmic side. The chain crosses the membrane as a helical span at residues 206-229 (IVSIWILSFILAIPEAIGFVMVPF). At 230–256 (EYKGELHRTCMLNATSKFMEFYQDVKD) the chain is on the extracellular side. Asn242 is a glycosylation site (N-linked (GlcNAc...) asparagine). The helical transmembrane segment at 257–278 (WWLFGFYFCMPLVCTAIFYTLM) threads the bilayer. Residues 279 to 306 (TCEMLNRRNGSLRIALSEHLKQRREVAK) are Cytoplasmic-facing. Residues 307–328 (TVFCLVVIFALCWFPLHLSRIL) form a helical membrane-spanning segment. The Extracellular segment spans residues 329–347 (KKTVYDEMDKNRCELLSFL). Residues 348–372 (LLMDYIGINLATMNSCINPIALYFV) traverse the membrane as a helical segment. Residues 373–427 (SKKFKNCFQSCLCCCCHQSKSLMTSVPMNGTSIQWKNQEQNNHNTERSSHKDSMN) are Cytoplasmic-facing. The interval 408–427 (KNQEQNNHNTERSSHKDSMN) is disordered. Positions 416 to 427 (NTERSSHKDSMN) are enriched in basic and acidic residues. Ser425 carries the phosphoserine modification.

Belongs to the G-protein coupled receptor 1 family. Endothelin receptor subfamily. EDNRA sub-subfamily. Interacts with HDAC7 and KAT5.

The protein resides in the cell membrane. Functionally, receptor for endothelin-1. Mediates its action by association with G proteins that activate a phosphatidylinositol-calcium second messenger system. The rank order of binding affinities for ET-A is: ET1 &gt; ET2 &gt;&gt; ET3. The polypeptide is Endothelin-1 receptor (Mus musculus (Mouse)).